The chain runs to 211 residues: Uracil phosphoribosyltransferase (211 aa).

Residues Arg77, Arg102, and 129–137 (DPMLATGGS) each bind 5-phospho-alpha-D-ribose 1-diphosphate. Uracil contacts are provided by residues Ile192 and 197 to 199 (GDA). Asp198 lines the 5-phospho-alpha-D-ribose 1-diphosphate pocket.

Belongs to the UPRTase family. Requires Mg(2+) as cofactor.

The enzyme catalyses UMP + diphosphate = 5-phospho-alpha-D-ribose 1-diphosphate + uracil. Its pathway is pyrimidine metabolism; UMP biosynthesis via salvage pathway; UMP from uracil: step 1/1. Its activity is regulated as follows. Allosterically activated by GTP. In terms of biological role, catalyzes the conversion of uracil and 5-phospho-alpha-D-ribose 1-diphosphate (PRPP) to UMP and diphosphate. The chain is Uracil phosphoribosyltransferase from Corynebacterium efficiens (strain DSM 44549 / YS-314 / AJ 12310 / JCM 11189 / NBRC 100395).